A 362-amino-acid polypeptide reads, in one-letter code: 3-dehydroquinate synthase (362 aa).

NAD(+)-binding positions include 72–77 (SGEEAK), 106–110 (GVTGD), 130–131 (TT), lysine 142, and lysine 151. Zn(2+) contacts are provided by glutamate 184, histidine 246, and histidine 263.

The protein belongs to the sugar phosphate cyclases superfamily. Dehydroquinate synthase family. Co(2+) serves as cofactor. It depends on Zn(2+) as a cofactor. The cofactor is NAD(+).

The protein localises to the cytoplasm. It catalyses the reaction 7-phospho-2-dehydro-3-deoxy-D-arabino-heptonate = 3-dehydroquinate + phosphate. The protein operates within metabolic intermediate biosynthesis; chorismate biosynthesis; chorismate from D-erythrose 4-phosphate and phosphoenolpyruvate: step 2/7. Functionally, catalyzes the conversion of 3-deoxy-D-arabino-heptulosonate 7-phosphate (DAHP) to dehydroquinate (DHQ). This Bacillus velezensis (strain DSM 23117 / BGSC 10A6 / LMG 26770 / FZB42) (Bacillus amyloliquefaciens subsp. plantarum) protein is 3-dehydroquinate synthase.